A 258-amino-acid chain; its full sequence is Ubiquinone/menaquinone biosynthesis C-methyltransferase UbiE (258 aa).

S-adenosyl-L-methionine is bound by residues Thr-81, Asp-102, and 130 to 131 (NA).

It belongs to the class I-like SAM-binding methyltransferase superfamily. MenG/UbiE family.

It carries out the reaction a 2-demethylmenaquinol + S-adenosyl-L-methionine = a menaquinol + S-adenosyl-L-homocysteine + H(+). The enzyme catalyses a 2-methoxy-6-(all-trans-polyprenyl)benzene-1,4-diol + S-adenosyl-L-methionine = a 5-methoxy-2-methyl-3-(all-trans-polyprenyl)benzene-1,4-diol + S-adenosyl-L-homocysteine + H(+). The protein operates within quinol/quinone metabolism; menaquinone biosynthesis; menaquinol from 1,4-dihydroxy-2-naphthoate: step 2/2. It participates in cofactor biosynthesis; ubiquinone biosynthesis. Methyltransferase required for the conversion of demethylmenaquinol (DMKH2) to menaquinol (MKH2) and the conversion of 2-polyprenyl-6-methoxy-1,4-benzoquinol (DDMQH2) to 2-polyprenyl-3-methyl-6-methoxy-1,4-benzoquinol (DMQH2). The polypeptide is Ubiquinone/menaquinone biosynthesis C-methyltransferase UbiE (Sinorhizobium fredii (strain NBRC 101917 / NGR234)).